A 335-amino-acid chain; its full sequence is MRMQSNPKADLLLDVRDLETHFYGEESVTRALGGVNFHVKSGEMLGIVGESGCGKSVTALSILRLLPKQTAKTVGGEVIFKGRNLLELSERQMREVRGNRIAMIFQDPMTSLSPVHTVGRQIAEAVQIHGRVSRAEALEKALEMLRLVRIADPERRLNNYPHEMSGGMRQRAMIAMALACSPELLIADEPTTALDVTIQAQILRLIVDLKDRMGTAVMFITHDLGVVAETCQRVIVMYAGRIVEQASVTDLFARPTHPYTRALMNSVPDRRRGRQSRLPEIPGVVPSLREPLVGCSFAERCPFAIGVCREKMPVLSEIQPGHAAACWRSNEVVNL.

One can recognise an ABC transporter domain in the interval 15–264; sequence VRDLETHFYG…PTHPYTRALM (250 aa). 49–56 serves as a coordination point for ATP; it reads GESGCGKS.

It belongs to the ABC transporter superfamily.

It localises to the cell inner membrane. Probably part of a binding-protein-dependent transport system y4tOPQRS for a peptide. Probably responsible for energy coupling to the transport system. This chain is Probable peptide ABC transporter ATP-binding protein y4tR, found in Sinorhizobium fredii (strain NBRC 101917 / NGR234).